A 138-amino-acid polypeptide reads, in one-letter code: MEGELIENNGLDIYDTSETPKKRGRPAKYNEKIATQIVLLVSEGYSLRKISMMPGMPSHRQMMRWQLEHMDFREGIAWMSWLWCAEAGRRAVEIIDEVDINAEDGPKQLRKAEAKAKALLAAAKLNSLKHSPFGDDKQ.

Residues 1 to 27 (MEGELIENNGLDIYDTSETPKKRGRPA) are disordered.

This is an uncharacterized protein from Escherichia coli (strain K12).